Reading from the N-terminus, the 139-residue chain is Holo-[acyl-carrier-protein] synthase (139 aa).

Mg(2+) is bound by residues Asp8 and Glu61.

The protein belongs to the P-Pant transferase superfamily. AcpS family. It depends on Mg(2+) as a cofactor.

The protein resides in the cytoplasm. It carries out the reaction apo-[ACP] + CoA = holo-[ACP] + adenosine 3',5'-bisphosphate + H(+). In terms of biological role, transfers the 4'-phosphopantetheine moiety from coenzyme A to a Ser of acyl-carrier-protein. This is Holo-[acyl-carrier-protein] synthase from Bradyrhizobium sp. (strain BTAi1 / ATCC BAA-1182).